A 268-amino-acid chain; its full sequence is Glutamate racemase (268 aa).

Residues 9 to 10 and 41 to 42 each bind substrate; these read DS and YG. Catalysis depends on C73, which acts as the Proton donor/acceptor. 74–75 contacts substrate; it reads NS. Residue C183 is the Proton donor/acceptor of the active site. 184 to 185 is a substrate binding site; that stretch reads TH.

It belongs to the aspartate/glutamate racemases family.

It carries out the reaction L-glutamate = D-glutamate. It participates in cell wall biogenesis; peptidoglycan biosynthesis. In terms of biological role, provides the (R)-glutamate required for cell wall biosynthesis. The polypeptide is Glutamate racemase (Shewanella piezotolerans (strain WP3 / JCM 13877)).